The chain runs to 521 residues: 2-isopropylmalate synthase (521 aa).

The Pyruvate carboxyltransferase domain occupies 12 to 274 (VIIFDTTLRD…WNKIDTTMLT (263 aa)). Mn(2+)-binding residues include Asp-21, His-209, His-211, and Asn-245. Positions 398–521 (KLVSLTVIAG…DMAAPAAAAS (124 aa)) are regulatory domain.

It belongs to the alpha-IPM synthase/homocitrate synthase family. LeuA type 1 subfamily. Homodimer. It depends on Mn(2+) as a cofactor.

The protein localises to the cytoplasm. It catalyses the reaction 3-methyl-2-oxobutanoate + acetyl-CoA + H2O = (2S)-2-isopropylmalate + CoA + H(+). The protein operates within amino-acid biosynthesis; L-leucine biosynthesis; L-leucine from 3-methyl-2-oxobutanoate: step 1/4. Functionally, catalyzes the condensation of the acetyl group of acetyl-CoA with 3-methyl-2-oxobutanoate (2-ketoisovalerate) to form 3-carboxy-3-hydroxy-4-methylpentanoate (2-isopropylmalate). In Rhodopseudomonas palustris (strain BisA53), this protein is 2-isopropylmalate synthase.